Consider the following 948-residue polypeptide: MDTSPYDFLKLYPWLSRGEADKGTLLDAFPGETFEQSLASDVAMRRAVQDDPAFGHQKLVETFLSEDTPYRELLLFHAPGTGKTCTVVSVAERAKEKGLTRGCIVLARGAALLRNFLHELVFNCGTGGRYIPEGYADMGDQERTRKMRKAVSSYYQFRTYETFAKSVATMSAEAIRARYDRFVIVMDEVHHLRSVQAEGVNTYSAISRFLRTVRGCVKMLLTGTPMTNEPGELADVLNLILPQDKTIRPEDGIFSNSGDLLKPDELAERVRGRVSYLKAARPDAGLTFAGEVLGGTGMTHLRLVRLEMSAFQSDAYASAWDQDAGDRNIFSNSRQCSLAVMPDRRWGSAAEARNPSQVRRMAGQNLAEYSVKYDYLVRVASSSPKTFAYCEYVNGSGLSLLSDILLANGWRRATGRETTPGKRFALLTASQKNIHKIVQRFNHEDNVDGAYISLLLGSRVVAEGLTFKEVRHTVILTPHWNYTETAQAIARSWRAGSHDRLKARGEAVAVTVHRLVAVPRGRDTPRSIDSDMYAVSEVKDKRIKAVERILMTSAADCSLLRSRNLYPSEFDGSRECEYGRCAYRCSNVSVEPGPLPALLGASAAEAVAQVRLDGGGDPAIMKVDMSTLWAEVTAGRRYVNRWGDGAVLRAEGGRLELSAPYGSSEEGRWGDFYKTRNLCYAKMDQDHLRADDLRDSLPQEVEELLTVSPVETIGETASAMPQEVATAILMACVQARADGKTLNVVRRDALLDFYKGFYAMGPSGWTVWLHARGANAKVYDGRRWNPADEDTLEFLAARSAKFTDTRIGYYGLYNPNLKDFCIRDVTQGKRDKVDLRKLTVGRRCVDWDQRTLVHIVARLMKIDGRRDFMPHATLREMRELAEQDPLHEPSDLTSKEACRRFLFWTQKGDNKFRRQDICKAMEKWFIENDLMEDNFDCGHQHKRRGKFA.

Positions leucine 64 to glutamine 243 constitute a Helicase ATP-binding domain. Histidine 77 to threonine 84 is an ATP binding site. Positions aspartate 187–histidine 190 match the DEAH box motif. The Helicase C-terminal domain maps to valine 371–alanine 554.

This chain is Putative helicase 009L, found in Frog virus 3 (isolate Goorha) (FV-3).